Here is a 276-residue protein sequence, read N- to C-terminus: Formamidopyrimidine-DNA glycosylase (276 aa).

The active-site Schiff-base intermediate with DNA is Pro2. Residue Glu3 is the Proton donor of the active site. Lys60 (proton donor; for beta-elimination activity) is an active-site residue. Positions 93 and 112 each coordinate DNA. An FPG-type zinc finger spans residues 240 to 274 (NVYGKKGEPCVTCGTILEKTVVGGRGTHYCPICQP). Arg264 functions as the Proton donor; for delta-elimination activity in the catalytic mechanism.

This sequence belongs to the FPG family. Monomer. It depends on Zn(2+) as a cofactor.

It catalyses the reaction Hydrolysis of DNA containing ring-opened 7-methylguanine residues, releasing 2,6-diamino-4-hydroxy-5-(N-methyl)formamidopyrimidine.. The catalysed reaction is 2'-deoxyribonucleotide-(2'-deoxyribose 5'-phosphate)-2'-deoxyribonucleotide-DNA = a 3'-end 2'-deoxyribonucleotide-(2,3-dehydro-2,3-deoxyribose 5'-phosphate)-DNA + a 5'-end 5'-phospho-2'-deoxyribonucleoside-DNA + H(+). Involved in base excision repair of DNA damaged by oxidation or by mutagenic agents. Acts as a DNA glycosylase that recognizes and removes damaged bases. Has a preference for oxidized purines, such as 7,8-dihydro-8-oxoguanine (8-oxoG). Has AP (apurinic/apyrimidinic) lyase activity and introduces nicks in the DNA strand. Cleaves the DNA backbone by beta-delta elimination to generate a single-strand break at the site of the removed base with both 3'- and 5'-phosphates. The protein is Formamidopyrimidine-DNA glycosylase of Bacillus cereus (strain ATCC 10987 / NRS 248).